A 708-amino-acid chain; its full sequence is Glycine--tRNA ligase beta subunit (708 aa).

It belongs to the class-II aminoacyl-tRNA synthetase family. Tetramer of two alpha and two beta subunits.

The protein resides in the cytoplasm. The enzyme catalyses tRNA(Gly) + glycine + ATP = glycyl-tRNA(Gly) + AMP + diphosphate. The chain is Glycine--tRNA ligase beta subunit from Paracidovorax citrulli (strain AAC00-1) (Acidovorax citrulli).